The primary structure comprises 309 residues: GATA transcription factor 25 (309 aa).

A disordered region spans residues 1–35; the sequence is MFGRHSIIPNNQIGTASASAGEDHVSASATSGHIP. Over residues 8-18 the composition is skewed to polar residues; sequence IPNNQIGTASA. The region spanning 77–112 is the Tify domain; it reads PPEGANQLTISFRGQVYVFDAVGADKVDAVLSLLGG. In terms of domain architecture, CCT spans 146–188; sequence RAQSLDRFRKKRNARCFEKKVRYGVRQEVALRMARNKGQFTSS. A compositionally biased stretch (polar residues) spans 187–202; that stretch reads SSKMTDGAYNSGTDQD. The segment at 187 to 207 is disordered; it reads SSKMTDGAYNSGTDQDSAQDD. A GATA-type zinc finger spans residues 208 to 267; that stretch reads AHPEISCTHCGISSKCTPMMRRGPSGPRTLCNACGLFWANRGTLRDLSKKTEENQLALMK. Residues 290 to 309 are disordered; sequence EHTSMVSLANGDNSNLLGDH. Positions 293-309 are enriched in polar residues; that stretch reads SMVSLANGDNSNLLGDH.

Belongs to the type IV zinc-finger family. Class C subfamily. In terms of tissue distribution, predominantly expressed in shoot apices, inflorescences and roots.

Its subcellular location is the nucleus. Transcriptional activator that specifically binds 5'-GATA-3' or 5'-GAT-3' motifs within gene promoters. The sequence is that of GATA transcription factor 25 (GATA25) from Arabidopsis thaliana (Mouse-ear cress).